Consider the following 60-residue polypeptide: Hemocyte defensin Cg-Defh1 (60 aa).

Positions 1–17 (LFTLVVLLMVSADMAFA) are cleaved as a signal peptide. Beta-D-GlcNAc-(1-&gt;4)-Mur2Ac(oyl-L-Ala-gamma-D-Glu-L-Lys-D-Ala-D-Ala)-di-trans,octa-cis-undecaprenyl diphosphate-binding residues include Phe19, Gly20, and Cys21. 4 cysteine pairs are disulfide-bonded: Cys21-Cys42, Cys28-Cys51, Cys32-Cys53, and Cys37-Cys56. Positions 22–25 (PRDQ) are binds to membrane interface. Residue His31 coordinates beta-D-GlcNAc-(1-&gt;4)-Mur2Ac(oyl-L-Ala-gamma-D-Glu-L-Lys-D-Ala-D-Ala)-di-trans,octa-cis-undecaprenyl diphosphate. The binds to membrane interface stretch occupies residues 43–49 (DAVTLWL). Cys51 serves as a coordination point for beta-D-GlcNAc-(1-&gt;4)-Mur2Ac(oyl-L-Ala-gamma-D-Glu-L-Lys-D-Ala-D-Ala)-di-trans,octa-cis-undecaprenyl diphosphate.

This sequence belongs to the invertebrate defensin family. As to expression, expressed in hemocytes.

It is found in the secreted. It localises to the target cell membrane. Its function is as follows. Antibacterial peptide mostly active against Gram-positive bacteria. It acts by selectively inhibiting peptidoglycan biosynthesis through complex formation with the cell wall precursor lipid II (1:1 molar ratio) thus inhibiting cell wall synthesis. It does not disrupt cell membranes. Is noticeably less potent than Cg-Defh2 and Cg-Defm. Shows no or limited activities against Gram-negative bacteria. The sequence is that of Hemocyte defensin Cg-Defh1 from Magallana gigas (Pacific oyster).